A 457-amino-acid chain; its full sequence is Multidrug resistance protein MdtK (457 aa).

The next 12 helical transmembrane spans lie at 11-31, 53-73, 93-113, 127-147, 160-180, 191-211, 243-263, 276-296, 316-336, 357-377, 387-407, and 418-438; these read LLALAIPVILAQVAQTAMGFV, IWLPAILFGHGLLLALTPVVA, WLAGFVSVLIMVVLWNAGYII, AVGYLRALLWGAPGYLFFQVA, GMVMGFIGLLVNIPVNYIFIY, VGCGVATASVYWVMFASMLWW, LPIALALFFEVTLFAVVALLV, IALNFSSLMFVLPLSLAAAVT, RTGVGVGVCLAVFTAIFTVLM, LMLLAAIYQISDSIQVIGSGI, IFFITFTAYWVLGLPSGYLLA, and PAGFWCGFIIGLTSAAIMMML.

Belongs to the multi antimicrobial extrusion (MATE) (TC 2.A.66.1) family. MdtK subfamily.

The protein localises to the cell inner membrane. In terms of biological role, multidrug efflux pump that functions probably as a Na(+)/drug antiporter. In Klebsiella pneumoniae subsp. pneumoniae (strain ATCC 700721 / MGH 78578), this protein is Multidrug resistance protein MdtK.